A 45-amino-acid chain; its full sequence is Scolopendra 20417.15 Da toxin (45 aa).

Positions 26–45 (KVANGQEAGQPGAXNMKELH) are disordered.

It belongs to the CRISP family. Venom allergen 5-like subfamily. Contains 3 disulfide bonds. As to expression, expressed by the venom gland.

It is found in the secreted. The sequence is that of Scolopendra 20417.15 Da toxin from Scolopendra viridicornis nigra (Brazilian giant centipede).